The following is a 328-amino-acid chain: Tryptophan--tRNA ligase (328 aa).

ATP is bound by residues 11–13 and 19–20; these read QPT and GN. The short motif at 12–20 is the 'HIGH' region element; it reads PTGNIHLGN. L-tryptophan is bound at residue aspartate 135. ATP is bound by residues 147 to 149, isoleucine 186, and 195 to 199; these read GED and KMSKS. The 'KMSKS' region motif lies at 195 to 199; that stretch reads KMSKS.

The protein belongs to the class-I aminoacyl-tRNA synthetase family. As to quaternary structure, homodimer.

Its subcellular location is the cytoplasm. It catalyses the reaction tRNA(Trp) + L-tryptophan + ATP = L-tryptophyl-tRNA(Trp) + AMP + diphosphate + H(+). Its function is as follows. Catalyzes the attachment of tryptophan to tRNA(Trp). The sequence is that of Tryptophan--tRNA ligase from Wolinella succinogenes (strain ATCC 29543 / DSM 1740 / CCUG 13145 / JCM 31913 / LMG 7466 / NCTC 11488 / FDC 602W) (Vibrio succinogenes).